The primary structure comprises 885 residues: Rho GTPase-activating protein gacFF (885 aa).

Residues 168–182 (TTTNNSNNSNSNNNN) show a composition bias toward low complexity. Positions 168–187 (TTTNNSNNSNSNNNNKQYNS) are disordered. Residues 222–249 (LINKIQNDSEQLKLVLSQVEQQIEFLKS) adopt a coiled-coil conformation. In terms of domain architecture, F-box spans 348–394 (SDIFSLLPTHLTLYVFSYLEPKELLILAQVSSQWQKLAGDNLLWVRF). The PH domain maps to 464-571 (SSSKEGWLYK…WMILLNSIIK (108 aa)). Low complexity-rich tracts occupy residues 594–622 (NNVY…NNNN) and 629–648 (LPPL…SSTG). Positions 594–680 (NNVYINNNNN…GGGSGGNNNF (87 aa)) are disordered. The Rho-GAP domain occupies 701 to 885 (VALSKILENQ…KYYDEIFIKK (185 aa)).

It localises to the cytoplasm. Functionally, rho GTPase-activating protein involved in the signal transduction pathway. The protein is Rho GTPase-activating protein gacFF (gacFF) of Dictyostelium discoideum (Social amoeba).